The primary structure comprises 115 residues: NADH-ubiquinone oxidoreductase chain 3 (115 aa).

The next 3 membrane-spanning stretches (helical) occupy residues 3–23 (VMLT…IAFW), 55–75 (FFLV…LLPL), and 84–104 (LTTM…SLAY).

The protein belongs to the complex I subunit 3 family. As to quaternary structure, core subunit of respiratory chain NADH dehydrogenase (Complex I) which is composed of 45 different subunits. Interacts with TMEM186. Interacts with TMEM242.

It localises to the mitochondrion inner membrane. It catalyses the reaction a ubiquinone + NADH + 5 H(+)(in) = a ubiquinol + NAD(+) + 4 H(+)(out). Its function is as follows. Core subunit of the mitochondrial membrane respiratory chain NADH dehydrogenase (Complex I) which catalyzes electron transfer from NADH through the respiratory chain, using ubiquinone as an electron acceptor. Essential for the catalytic activity of complex I. This is NADH-ubiquinone oxidoreductase chain 3 from Canis lupus familiaris (Dog).